Here is a 711-residue protein sequence, read N- to C-terminus: Ribosomal RNA large subunit methyltransferase K/L (711 aa).

In terms of domain architecture, THUMP spans 42-153; that stretch reads DAQRAVLWSR…KGRATISVDL (112 aa).

This sequence belongs to the methyltransferase superfamily. RlmKL family.

Its subcellular location is the cytoplasm. The catalysed reaction is guanosine(2445) in 23S rRNA + S-adenosyl-L-methionine = N(2)-methylguanosine(2445) in 23S rRNA + S-adenosyl-L-homocysteine + H(+). The enzyme catalyses guanosine(2069) in 23S rRNA + S-adenosyl-L-methionine = N(2)-methylguanosine(2069) in 23S rRNA + S-adenosyl-L-homocysteine + H(+). Its function is as follows. Specifically methylates the guanine in position 2445 (m2G2445) and the guanine in position 2069 (m7G2069) of 23S rRNA. This Xanthomonas campestris pv. campestris (strain 8004) protein is Ribosomal RNA large subunit methyltransferase K/L.